The following is a 186-amino-acid chain: ATP synthase subunit b (186 aa).

Residues 25–45 traverse the membrane as a helical segment; it reads IVWSVVCVAIIAVVFYKYVIP.

Belongs to the ATPase B chain family. As to quaternary structure, F-type ATPases have 2 components, F(1) - the catalytic core - and F(0) - the membrane proton channel. F(1) has five subunits: alpha(3), beta(3), gamma(1), delta(1), epsilon(1). F(0) has three main subunits: a(1), b(2) and c(10-14). The alpha and beta chains form an alternating ring which encloses part of the gamma chain. F(1) is attached to F(0) by a central stalk formed by the gamma and epsilon chains, while a peripheral stalk is formed by the delta and b chains.

It is found in the cell membrane. In terms of biological role, f(1)F(0) ATP synthase produces ATP from ADP in the presence of a proton or sodium gradient. F-type ATPases consist of two structural domains, F(1) containing the extramembraneous catalytic core and F(0) containing the membrane proton channel, linked together by a central stalk and a peripheral stalk. During catalysis, ATP synthesis in the catalytic domain of F(1) is coupled via a rotary mechanism of the central stalk subunits to proton translocation. Its function is as follows. Component of the F(0) channel, it forms part of the peripheral stalk, linking F(1) to F(0). This chain is ATP synthase subunit b, found in Nocardia farcinica (strain IFM 10152).